The sequence spans 497 residues: Guanosine-5'-triphosphate,3'-diphosphate pyrophosphatase (497 aa).

This sequence belongs to the GppA/Ppx family. GppA subfamily.

It carries out the reaction guanosine 3'-diphosphate 5'-triphosphate + H2O = guanosine 3',5'-bis(diphosphate) + phosphate + H(+). It participates in purine metabolism; ppGpp biosynthesis; ppGpp from GTP: step 2/2. Functionally, catalyzes the conversion of pppGpp to ppGpp. Guanosine pentaphosphate (pppGpp) is a cytoplasmic signaling molecule which together with ppGpp controls the 'stringent response', an adaptive process that allows bacteria to respond to amino acid starvation, resulting in the coordinated regulation of numerous cellular activities. The sequence is that of Guanosine-5'-triphosphate,3'-diphosphate pyrophosphatase from Vibrio cholerae serotype O1 (strain ATCC 39541 / Classical Ogawa 395 / O395).